The sequence spans 315 residues: Olfactory receptor 3A2 (315 aa).

At 1–29 (MEPEAGTNRTAVAEFILLGLVQTEEMQPV) the chain is on the extracellular side. The N-linked (GlcNAc...) asparagine glycan is linked to N8. The helical transmembrane segment at 30 to 52 (VFVLFLFAYLVTIGGNLSILAAI) threads the bilayer. The Cytoplasmic portion of the chain corresponds to 53-60 (LVEPKLHA). The helical transmembrane segment at 61–82 (PMYFFLGNLSVLDVGCITVTVP) threads the bilayer. Residues 83–103 (AMLGRLLSHKSTISYDACLSQ) are Extracellular-facing. The cysteines at positions 100 and 192 are disulfide-linked. The helical transmembrane segment at 104–123 (LFFFHLLAGMDCFLLTAMAY) threads the bilayer. The Cytoplasmic portion of the chain corresponds to 124-143 (DRFLAICWPLTYSTRMSQTV). Residues 144–161 (QRMLVAASWACAFTNALT) form a helical membrane-spanning segment. Over 162–199 (HTVAMSTLNFCGPNEVNHFYCDLPQLFQLSCSSTQLNE) the chain is Extracellular. The chain crosses the membrane as a helical span at residues 200–223 (LLLFAVGFIMAGTPLVLIITSYSH). Residues 224-240 (VAAAVLRIRSVEGWKKA) are Cytoplasmic-facing. A helical transmembrane segment spans residues 241–264 (FSTCGSHLTVVCLFFGTGIFNYMR). The Extracellular segment spans residues 265 to 275 (LGSEEASDKDK). Residues 276 to 295 (GVGVFNTVINPMLNPLIYSL) form a helical membrane-spanning segment. At 296-315 (RNPDVQGALWRIFLGRRSLT) the chain is on the cytoplasmic side.

Belongs to the G-protein coupled receptor 1 family.

The protein localises to the cell membrane. Its function is as follows. Odorant receptor. The polypeptide is Olfactory receptor 3A2 (OR3A2) (Pan troglodytes (Chimpanzee)).